A 475-amino-acid chain; its full sequence is Membrane-bound lytic murein transglycosylase F (475 aa).

The signal sequence occupies residues 1–30 (MKKLKINYLFIGILTLLLAAALWPSIPWFG). The tract at residues 31-269 (KTENHIAAIQ…RIEEKYLGHG (239 aa)) is non-LT domain. The LT domain stretch occupies residues 270–475 (DDFDYVDTRS…MKLAQDYPAV (206 aa)). Glu-314 is a catalytic residue.

The protein in the N-terminal section; belongs to the bacterial solute-binding protein 3 family. This sequence in the C-terminal section; belongs to the transglycosylase Slt family.

The protein localises to the cell outer membrane. The enzyme catalyses Exolytic cleavage of the (1-&gt;4)-beta-glycosidic linkage between N-acetylmuramic acid (MurNAc) and N-acetylglucosamine (GlcNAc) residues in peptidoglycan, from either the reducing or the non-reducing ends of the peptidoglycan chains, with concomitant formation of a 1,6-anhydrobond in the MurNAc residue.. Its function is as follows. Murein-degrading enzyme that degrades murein glycan strands and insoluble, high-molecular weight murein sacculi, with the concomitant formation of a 1,6-anhydromuramoyl product. Lytic transglycosylases (LTs) play an integral role in the metabolism of the peptidoglycan (PG) sacculus. Their lytic action creates space within the PG sacculus to allow for its expansion as well as for the insertion of various structures such as secretion systems and flagella. In Salmonella typhi, this protein is Membrane-bound lytic murein transglycosylase F.